The sequence spans 273 residues: Shikimate dehydrogenase (NADP(+)) (273 aa).

Shikimate-binding positions include 15-17 (SQS) and Thr-62. The active-site Proton acceptor is Lys-66. Residue Glu-78 participates in NADP(+) binding. Shikimate is bound by residues Asn-87 and Asp-102. Residues 127-131 (GAGGA), 151-156 (NRTVTK), and Met-215 each bind NADP(+). Tyr-217 serves as a coordination point for shikimate. Gly-239 lines the NADP(+) pocket.

This sequence belongs to the shikimate dehydrogenase family. As to quaternary structure, homodimer.

The catalysed reaction is shikimate + NADP(+) = 3-dehydroshikimate + NADPH + H(+). Its pathway is metabolic intermediate biosynthesis; chorismate biosynthesis; chorismate from D-erythrose 4-phosphate and phosphoenolpyruvate: step 4/7. Involved in the biosynthesis of the chorismate, which leads to the biosynthesis of aromatic amino acids. Catalyzes the reversible NADPH linked reduction of 3-dehydroshikimate (DHSA) to yield shikimate (SA). The polypeptide is Shikimate dehydrogenase (NADP(+)) (Laribacter hongkongensis (strain HLHK9)).